A 307-amino-acid polypeptide reads, in one-letter code: NAD kinase 1 (307 aa).

Asp-67 acts as the Proton acceptor in catalysis. Residues 67 to 68, 149 to 150, Arg-160, Asp-181, and 192 to 197 each bind NAD(+); these read DG, NE, and TCYTSS.

This sequence belongs to the NAD kinase family. The cofactor is a divalent metal cation.

The protein resides in the cytoplasm. It catalyses the reaction NAD(+) + ATP = ADP + NADP(+) + H(+). Functionally, involved in the regulation of the intracellular balance of NAD and NADP, and is a key enzyme in the biosynthesis of NADP. Catalyzes specifically the phosphorylation on 2'-hydroxyl of the adenosine moiety of NAD to yield NADP. Essential for photoheterotrophic growth. Has a significant function in the oxidative pentose phosphate (OPP) pathway for glucose catabolism under photoheterotrophic conditions. Is also involved in cellular redox homeostasis. The sequence is that of NAD kinase 1 from Synechocystis sp. (strain ATCC 27184 / PCC 6803 / Kazusa).